We begin with the raw amino-acid sequence, 203 residues long: Ras-related protein Rab-13 (203 aa).

Residues serine 17, glycine 18, glycine 20, lysine 21, threonine 22, cysteine 23, and threonine 40 each coordinate GTP. Mg(2+) is bound at residue threonine 22. The Switch 1 signature appears at 31 to 45 (DNFNSTYISTIGIDF). Position 40 (threonine 40) interacts with Mg(2+). Residues lysine 46 and lysine 58 each participate in a glycyl lysine isopeptide (Lys-Gly) (interchain with G-Cter in ubiquitin) cross-link. Aspartate 63 serves as a coordination point for Mg(2+). The Switch 2 motif lies at 63-80 (DTAGQERFKTITTAYYRG). The GTP site is built by glycine 66, asparagine 121, lysine 122, aspartate 124, alanine 152, and lysine 153. Positions 173-203 (TGGRRSGNSSKPSSTDLKVSDKKNSNKCSLG) are disordered. Position 178 is a phosphoserine (serine 178). A compositionally biased stretch (polar residues) spans 178–189 (SGNSSKPSSTDL). Cysteine 200 is subject to Cysteine methyl ester. Cysteine 200 is lipidated: S-geranylgeranyl cysteine. A propeptide spans 201 to 203 (SLG) (removed in mature form).

This sequence belongs to the small GTPase superfamily. Rab family. In terms of assembly, interacts (GTP-bound form) with MICALL2; competes with RAB8A and is involved in tight junctions assembly. Interacts (GTP-bound form) with MICALL1. Interacts (GTP-bound form) with MICAL1, MICAL3, MICALCL, EHBP1 and EHBP1L1; ternary complexes of RAB8A, RAB13 and either MICAL1 or EHBP1L1 are possible. Interacts with PRKACA; downstream effector of RAB13 involved in tight junction assembly. Interacts with GRB2; may recruit RAB13 to the leading edge of migrating endothelial cells where it can activate RHOA. Interacts (isoprenylated form) with PDE6D; dissociates RAB13 from membranes. Interacts with BICDL2/BICDR2. Interacts with LEPROT and LEPROTL1. Mg(2+) is required as a cofactor. Post-translationally, ubiquitinated via 'Lys-11'-linked ubiquitination on Lys-46 and Lys-58; impairing the recruitment of guanosine diphosphate (GDP) dissociation inhibitor 1/GDI1. As to expression, highest levels found in lung, kidney, whole brain and spinal cord. Expressed in all tissues tested including Sertoli and germ cells (at protein level). Also detected in osteoclasts.

It localises to the cell membrane. The protein resides in the cytoplasmic vesicle membrane. The protein localises to the cell junction. Its subcellular location is the tight junction. It is found in the golgi apparatus. It localises to the trans-Golgi network membrane. The protein resides in the recycling endosome membrane. The protein localises to the cell projection. Its subcellular location is the lamellipodium. It catalyses the reaction GTP + H2O = GDP + phosphate + H(+). Its activity is regulated as follows. Regulated by guanine nucleotide exchange factors (GEFs) including DENND1C, which promote the exchange of bound GDP for free GTP. Regulated by GTPase activating proteins (GAPs) which increase the GTP hydrolysis activity. Inhibited by GDP dissociation inhibitors (GDIs). Activated in response to insulin. Its function is as follows. The small GTPases Rab are key regulators of intracellular membrane trafficking, from the formation of transport vesicles to their fusion with membranes. Rabs cycle between an inactive GDP-bound form and an active GTP-bound form that is able to recruit to membranes different sets of downstream effectors directly responsible for vesicle formation, movement, tethering and fusion. RAB13 is involved in endocytic recycling and regulates the transport to the plasma membrane of transmembrane proteins like the tight junction protein OCLN/occludin. Thereby, it regulates the assembly and the activity of tight junctions. Moreover, it may also regulate tight junction assembly by activating the PKA signaling pathway and by reorganizing the actin cytoskeleton through the activation of the downstream effectors PRKACA and MICALL2 respectively. Through its role in tight junction assembly, may play a role in the establishment of Sertoli cell barrier. Plays also a role in angiogenesis through regulation of endothelial cells chemotaxis. Also involved in neurite outgrowth. Has also been proposed to play a role in post-Golgi membrane trafficking from the TGN to the recycling endosome. Finally, it has been involved in insulin-induced transport to the plasma membrane of the glucose transporter GLUT4 and therefore may play a role in glucose homeostasis. This is Ras-related protein Rab-13 from Rattus norvegicus (Rat).